Consider the following 2485-residue polypeptide: Probable polyketide synthase 10 (2485 aa).

Residues 8–447 (EDDIAIIGVG…GANCCIILSE (440 aa)) form the Ketosynthase family 3 (KS3) domain. Catalysis depends on for beta-ketoacyl synthase activity residues Cys-184, His-325, and His-363. Residues 636 to 669 (GIEASFIVGHSLGEISAAHCSGMIDLETLCYIIY) form an acyl/malonyl transferase region. Ser-646 acts as the For acyl/malonyl transferase activity in catalysis. Residues 930–1054 (PPITILGNES…GNFHISNNLF (125 aa)) are N-terminal hotdog fold. The PKS/mFAS DH domain maps to 930-1220 (PPITILGNES…SKSLTPIQDP (291 aa)). His-964 serves as the catalytic Proton acceptor; for dehydratase activity. The C-terminal hotdog fold stretch occupies residues 1071-1220 (NYSLIERDDL…SKSLTPIQDP (150 aa)). The active-site Proton donor; for dehydratase activity is the Asp-1134. Positions 2410–2485 (ESNKGIDGLL…NQLIKFLNKK (76 aa)) constitute a Carrier domain. Ser-2447 is modified (O-(pantetheine 4'-phosphoryl)serine).

It depends on pantetheine 4'-phosphate as a cofactor.

In terms of biological role, probable polyketide synthase. The chain is Probable polyketide synthase 10 (pks10) from Dictyostelium discoideum (Social amoeba).